Consider the following 259-residue polypeptide: MQETRPLFDRVLLTNDDGIDAPGLDVLEQVATQLAREVWIVAPAEDQSGTSHSLSLHEPLRVHRKGDRRFAVRGTPGDCVAIAISHLMKDARPDIVLSGVNRGGNLGTETVFSGTVGAAMTSMLVGVPAIALSQAFTDRNAVPWDTALALAPDVIRRLVAAGWDSDACLNVNFPPRPAQDVRGLKVTNQGAGTLQGVEIVSGRDPRDIEYHWLKLARAPRDDDADSETVALGEGYVAVTPLKFERTHDQALARLRTSLG.

A divalent metal cation contacts are provided by Asp-16, Asp-17, Ser-48, and Asn-101.

The protein belongs to the SurE nucleotidase family. Requires a divalent metal cation as cofactor.

It localises to the cytoplasm. It catalyses the reaction a ribonucleoside 5'-phosphate + H2O = a ribonucleoside + phosphate. Functionally, nucleotidase that shows phosphatase activity on nucleoside 5'-monophosphates. This is 5'-nucleotidase SurE 1 from Burkholderia lata (strain ATCC 17760 / DSM 23089 / LMG 22485 / NCIMB 9086 / R18194 / 383).